Consider the following 338-residue polypeptide: Tetraacyldisaccharide 4'-kinase (338 aa).

65 to 72 serves as a coordination point for ATP; that stretch reads TVGGTGKT.

Belongs to the LpxK family.

It catalyses the reaction a lipid A disaccharide + ATP = a lipid IVA + ADP + H(+). Its pathway is glycolipid biosynthesis; lipid IV(A) biosynthesis; lipid IV(A) from (3R)-3-hydroxytetradecanoyl-[acyl-carrier-protein] and UDP-N-acetyl-alpha-D-glucosamine: step 6/6. Functionally, transfers the gamma-phosphate of ATP to the 4'-position of a tetraacyldisaccharide 1-phosphate intermediate (termed DS-1-P) to form tetraacyldisaccharide 1,4'-bis-phosphate (lipid IVA). The sequence is that of Tetraacyldisaccharide 4'-kinase from Paraburkholderia xenovorans (strain LB400).